Here is a 511-residue protein sequence, read N- to C-terminus: Cobyric acid synthase (511 aa).

A GATase cobBQ-type domain is found at 251 to 443; the sequence is LLDIAIICLP…IHGIFDNDVF (193 aa). Catalysis depends on Cys-332, which acts as the Nucleophile. The active site involves His-435.

Belongs to the CobB/CobQ family. CobQ subfamily.

The protein operates within cofactor biosynthesis; adenosylcobalamin biosynthesis. In terms of biological role, catalyzes amidations at positions B, D, E, and G on adenosylcobyrinic A,C-diamide. NH(2) groups are provided by glutamine, and one molecule of ATP is hydrogenolyzed for each amidation. The protein is Cobyric acid synthase of Listeria monocytogenes serotype 4a (strain HCC23).